We begin with the raw amino-acid sequence, 73 residues long: V-type proton ATPase subunit e (73 aa).

Over 1–3 (MSS) the chain is Lumenal. A helical transmembrane segment spans residues 4-24 (FYTVVGVFIVVSAMSVLFWIM). Residues 25–35 (APKNNQAVWRS) are Cytoplasmic-facing. The chain crosses the membrane as a helical span at residues 36 to 56 (TVILTLAMMFLMWAITFLCQL). Topologically, residues 57–73 (HPLVAPRRSDLRPEFAE) are lumenal.

This sequence belongs to the V-ATPase e1/e2 subunit family. As to quaternary structure, V-ATPase is a heteromultimeric enzyme composed of a peripheral catalytic V1 complex (components A to H) attached to an integral membrane V0 proton pore complex (components: a, c, c', c'', d, e, f and VOA1).

The protein localises to the vacuole membrane. Functionally, subunit of the V0 complex of vacuolar(H+)-ATPase (V-ATPase), a multisubunit enzyme composed of a peripheral complex (V1) that hydrolyzes ATP and a membrane integral complex (V0) that translocates protons. V-ATPase is responsible for acidifying and maintaining the pH of intracellular compartments. The protein is V-type proton ATPase subunit e (VMA9) of Saccharomyces cerevisiae (strain ATCC 204508 / S288c) (Baker's yeast).